Consider the following 296-residue polypeptide: MPHTLLILNGKESGNPEVREAVKNVRDEGLTLHVRITWEHGDAKRYVEEAATLAVSTVIAGGGDGTINEVATALMSLPADKRPCLGILPLGTANDFATGCNIPLQIENALQLAVKGRAVAIDLAQVNGEHYFINMATGGFGTRITTETPDKLKAALGGVSYFIHGLMRLDALKADSCKIHGPDFHWSGDALVIGIGNGKQAGGGQLLCPDALINDGLMQLRLLTAKELLPAVLSTLFNGEKNKNVIDATVPWLDITAPNDITFNLDGEPLSGRHFHIEILPHAIQCRLPPNCPLLG.

Residues 1–130 (MPHTLLILNG…IDLAQVNGEH (130 aa)) enclose the DAGKc domain. Residues Thr37, 63 to 69 (GDGTINE), and Thr92 each bind ATP. Mg(2+) is bound by residues Leu212, Asp215, and Leu217. Glu268 functions as the Proton acceptor in the catalytic mechanism.

The protein belongs to the diacylglycerol/lipid kinase family. YegS lipid kinase subfamily. Mg(2+) is required as a cofactor. It depends on Ca(2+) as a cofactor.

Its subcellular location is the cytoplasm. In terms of biological role, probably phosphorylates lipids; the in vivo substrate is unknown. In Yersinia pestis bv. Antiqua (strain Angola), this protein is Probable lipid kinase YegS-like.